Reading from the N-terminus, the 384-residue chain is Dual-specificity RNA methyltransferase RlmN (384 aa).

Catalysis depends on glutamate 105, which acts as the Proton acceptor. The Radical SAM core domain maps to 111-350 (EDDRATLCVS…TIVRKTRGDD (240 aa)). Residues cysteine 118 and cysteine 355 are joined by a disulfide bond. [4Fe-4S] cluster contacts are provided by cysteine 125, cysteine 129, and cysteine 132. S-adenosyl-L-methionine contacts are provided by residues 179 to 180 (GE), serine 211, 233 to 235 (SLH), and asparagine 312. The active-site S-methylcysteine intermediate is the cysteine 355.

The protein belongs to the radical SAM superfamily. RlmN family. It depends on [4Fe-4S] cluster as a cofactor.

Its subcellular location is the cytoplasm. The enzyme catalyses adenosine(2503) in 23S rRNA + 2 reduced [2Fe-2S]-[ferredoxin] + 2 S-adenosyl-L-methionine = 2-methyladenosine(2503) in 23S rRNA + 5'-deoxyadenosine + L-methionine + 2 oxidized [2Fe-2S]-[ferredoxin] + S-adenosyl-L-homocysteine. The catalysed reaction is adenosine(37) in tRNA + 2 reduced [2Fe-2S]-[ferredoxin] + 2 S-adenosyl-L-methionine = 2-methyladenosine(37) in tRNA + 5'-deoxyadenosine + L-methionine + 2 oxidized [2Fe-2S]-[ferredoxin] + S-adenosyl-L-homocysteine. Functionally, specifically methylates position 2 of adenine 2503 in 23S rRNA and position 2 of adenine 37 in tRNAs. m2A2503 modification seems to play a crucial role in the proofreading step occurring at the peptidyl transferase center and thus would serve to optimize ribosomal fidelity. The polypeptide is Dual-specificity RNA methyltransferase RlmN (Shigella boydii serotype 18 (strain CDC 3083-94 / BS512)).